The primary structure comprises 734 residues: Photosystem I P700 chlorophyll a apoprotein A2 (734 aa).

8 consecutive transmembrane segments (helical) span residues isoleucine 46 to alanine 69, leucine 135 to glutamine 158, leucine 175 to isoleucine 199, isoleucine 273 to tyrosine 291, leucine 330 to tyrosine 353, alanine 369 to isoleucine 395, alanine 417 to histidine 439, and phenylalanine 517 to valine 535. Cysteine 559 and cysteine 568 together coordinate [4Fe-4S] cluster. The next 2 membrane-spanning stretches (helical) occupy residues alanine 575–tryptophan 596 and leucine 643–isoleucine 665. Histidine 654, methionine 662, and tyrosine 670 together coordinate chlorophyll a. A phylloquinone-binding site is contributed by tryptophan 671. A helical transmembrane segment spans residues leucine 707–alanine 727.

Belongs to the PsaA/PsaB family. As to quaternary structure, the PsaA/B heterodimer binds the P700 chlorophyll special pair and subsequent electron acceptors. PSI consists of a core antenna complex that captures photons, and an electron transfer chain that converts photonic excitation into a charge separation. The eukaryotic PSI reaction center is composed of at least 11 subunits. P700 is a chlorophyll a/chlorophyll a' dimer, A0 is one or more chlorophyll a, A1 is one or both phylloquinones and FX is a shared 4Fe-4S iron-sulfur center. serves as cofactor.

It localises to the plastid. It is found in the chloroplast thylakoid membrane. It carries out the reaction reduced [plastocyanin] + hnu + oxidized [2Fe-2S]-[ferredoxin] = oxidized [plastocyanin] + reduced [2Fe-2S]-[ferredoxin]. Functionally, psaA and PsaB bind P700, the primary electron donor of photosystem I (PSI), as well as the electron acceptors A0, A1 and FX. PSI is a plastocyanin-ferredoxin oxidoreductase, converting photonic excitation into a charge separation, which transfers an electron from the donor P700 chlorophyll pair to the spectroscopically characterized acceptors A0, A1, FX, FA and FB in turn. Oxidized P700 is reduced on the lumenal side of the thylakoid membrane by plastocyanin. This Phalaenopsis aphrodite subsp. formosana (Moth orchid) protein is Photosystem I P700 chlorophyll a apoprotein A2.